The chain runs to 318 residues: NADH-ubiquinone oxidoreductase chain 1 (318 aa).

Helical transmembrane passes span 2–22, 69–89, 102–122, 146–166, 171–191, 222–242, 253–273, and 294–314; these read FLIN…FLTL, FLFT…WAPL, LLFI…SGWA, MTTI…TAFA, HLWL…STLA, LFFM…VILF, EIST…FLWV, and LPLT…LACI.

It belongs to the complex I subunit 1 family.

The protein resides in the mitochondrion inner membrane. The catalysed reaction is a ubiquinone + NADH + 5 H(+)(in) = a ubiquinol + NAD(+) + 4 H(+)(out). Core subunit of the mitochondrial membrane respiratory chain NADH dehydrogenase (Complex I) that is believed to belong to the minimal assembly required for catalysis. Complex I functions in the transfer of electrons from NADH to the respiratory chain. The immediate electron acceptor for the enzyme is believed to be ubiquinone. This Loxodonta africana (African elephant) protein is NADH-ubiquinone oxidoreductase chain 1 (MT-ND1).